The chain runs to 153 residues: Prostaglandin E synthase (153 aa).

The Lumenal portion of the chain corresponds to Met1–Ala13. The helical transmembrane segment at Leu14–Lys42 threads the bilayer. Arg39 provides a ligand contact to glutathione. Residues Lys43 to Arg61 are Cytoplasmic-facing. Residues Asp62–Ser91 form a helical membrane-spanning segment. A glutathione-binding site is contributed by Arg74–Glu78. The Lumenal portion of the chain corresponds to Phe92–Asp96. The chain crosses the membrane as a helical span at residues Pro97–Gly120. Glutathione contacts are provided by His114 and Tyr118. The Cytoplasmic portion of the chain corresponds to Lys121 to Ala124. Residues Pro125–Leu153 form a helical membrane-spanning segment. Residue Arg127 to Tyr131 coordinates glutathione.

Belongs to the MAPEG family. Homotrimer. Glutathione serves as cofactor.

It is found in the membrane. Its subcellular location is the cytoplasm. The protein localises to the perinuclear region. The catalysed reaction is prostaglandin H2 = prostaglandin E2. It carries out the reaction 2-glyceryl-prostaglandin H2 = 2-glyceryl-prostaglandin E2. The enzyme catalyses prostaglandin G2 = (15S)-15-hydroperoxy-prostaglandin E2. It catalyses the reaction 1-chloro-2,4-dinitrobenzene + glutathione = 2,4-dinitrophenyl-S-glutathione + chloride + H(+). The catalysed reaction is (5S)-hydroperoxy-(6E,8Z,11Z,14Z)-eicosatetraenoate + 2 glutathione = (5S)-hydroxy-(6E,8Z,11Z,14Z)-eicosatetraenoate + glutathione disulfide + H2O. It participates in lipid metabolism; prostaglandin biosynthesis. In terms of biological role, terminal enzyme of the cyclooxygenase (COX)-2-mediated prostaglandin E2 (PGE2) biosynthetic pathway. Catalyzes the glutathione-dependent oxidoreduction of prostaglandin endoperoxide H2 (PGH2) to prostaglandin E2 (PGE2) in response to inflammatory stimuli. Plays a key role in inflammation response, fever and pain. Also catalyzes the oxidoreduction of endocannabinoids into prostaglandin glycerol esters and PGG2 into 15-hydroperoxy-PGE2. In addition, displays low glutathione transferase and glutathione-dependent peroxidase activities, toward 1-chloro-2,4-dinitrobenzene and 5-hydroperoxyicosatetraenoic acid (5-HPETE), respectively. This is Prostaglandin E synthase (PTGES) from Equus caballus (Horse).